A 502-amino-acid polypeptide reads, in one-letter code: AMP phosphorylase (502 aa).

Residues glycine 168, 195–200, and threonine 204 each bind AMP; that span reads SRAITS. The active-site Proton donor is aspartate 257. Positions 265 and 289 each coordinate AMP.

This sequence belongs to the thymidine/pyrimidine-nucleoside phosphorylase family. Type 2 subfamily.

The catalysed reaction is AMP + phosphate = alpha-D-ribose 1,5-bisphosphate + adenine. It carries out the reaction CMP + phosphate = cytosine + alpha-D-ribose 1,5-bisphosphate. The enzyme catalyses UMP + phosphate = alpha-D-ribose 1,5-bisphosphate + uracil. Its function is as follows. Catalyzes the conversion of AMP and phosphate to adenine and ribose 1,5-bisphosphate (R15P). Exhibits phosphorylase activity toward CMP and UMP in addition to AMP. Functions in an archaeal AMP degradation pathway, together with R15P isomerase and RubisCO. The sequence is that of AMP phosphorylase from Hyperthermus butylicus (strain DSM 5456 / JCM 9403 / PLM1-5).